The following is a 339-amino-acid chain: Uroporphyrinogen decarboxylase (339 aa).

Residues R23–R27, D72, Y147, T202, and H315 each bind substrate.

It belongs to the uroporphyrinogen decarboxylase family. Homodimer.

The protein localises to the cytoplasm. The catalysed reaction is uroporphyrinogen III + 4 H(+) = coproporphyrinogen III + 4 CO2. Its pathway is porphyrin-containing compound metabolism; protoporphyrin-IX biosynthesis; coproporphyrinogen-III from 5-aminolevulinate: step 4/4. In terms of biological role, catalyzes the decarboxylation of four acetate groups of uroporphyrinogen-III to yield coproporphyrinogen-III. The protein is Uroporphyrinogen decarboxylase of Geobacter sp. (strain M21).